Here is a 699-residue protein sequence, read N- to C-terminus: Elongation factor G (699 aa).

The region spanning E8–I283 is the tr-type G domain. Residues A17 to T24, D81 to H85, and N135 to D138 each bind GTP.

Belongs to the TRAFAC class translation factor GTPase superfamily. Classic translation factor GTPase family. EF-G/EF-2 subfamily.

It is found in the cytoplasm. Its function is as follows. Catalyzes the GTP-dependent ribosomal translocation step during translation elongation. During this step, the ribosome changes from the pre-translocational (PRE) to the post-translocational (POST) state as the newly formed A-site-bound peptidyl-tRNA and P-site-bound deacylated tRNA move to the P and E sites, respectively. Catalyzes the coordinated movement of the two tRNA molecules, the mRNA and conformational changes in the ribosome. This Rickettsia africae (strain ESF-5) protein is Elongation factor G.